We begin with the raw amino-acid sequence, 397 residues long: Acetate kinase (397 aa).

Asn8 serves as a coordination point for Mg(2+). Residue Lys15 coordinates ATP. Arg89 is a binding site for substrate. The active-site Proton donor/acceptor is Asp146. ATP is bound by residues His206–Gly210, Asp281–Arg283, and Gly329–Asn333. Glu382 contributes to the Mg(2+) binding site.

The protein belongs to the acetokinase family. In terms of assembly, homodimer. Mg(2+) serves as cofactor. It depends on Mn(2+) as a cofactor.

The protein localises to the cytoplasm. It carries out the reaction acetate + ATP = acetyl phosphate + ADP. The protein operates within metabolic intermediate biosynthesis; acetyl-CoA biosynthesis; acetyl-CoA from acetate: step 1/2. Catalyzes the formation of acetyl phosphate from acetate and ATP. Can also catalyze the reverse reaction. This Bacillus thuringiensis subsp. konkukian (strain 97-27) protein is Acetate kinase.